We begin with the raw amino-acid sequence, 218 residues long: Small ribosomal subunit protein uS3c (218 aa).

Residues 47 to 118 (VQKNIRISSG…KLNIAITRIS (72 aa)) form the KH type-2 domain.

The protein belongs to the universal ribosomal protein uS3 family. Part of the 30S ribosomal subunit.

Its subcellular location is the plastid. The protein resides in the chloroplast. The sequence is that of Small ribosomal subunit protein uS3c (rps3) from Aethionema cordifolium (Lebanon stonecress).